Here is an 88-residue protein sequence, read N- to C-terminus: Long neurotoxin LNTX-1 (88 aa).

A signal peptide spans 1 to 21 (MKTLLLTLVVVTIVCLDFGYA). 5 cysteine pairs are disulfide-bonded: Cys-24/Cys-42, Cys-35/Cys-63, Cys-48/Cys-52, Cys-67/Cys-78, and Cys-79/Cys-84.

Belongs to the three-finger toxin family. Long-chain subfamily. Type II alpha-neurotoxin sub-subfamily. Expressed by the venom gland.

Its subcellular location is the secreted. Binds with high affinity to muscular (alpha-1/CHRNA1) and neuronal (alpha-7/CHRNA7) nicotinic acetylcholine receptor (nAChR) and inhibits acetylcholine from binding to the receptor, thereby impairing neuromuscular and neuronal transmission. This Demansia vestigiata (Lesser black whip snake) protein is Long neurotoxin LNTX-1.